We begin with the raw amino-acid sequence, 574 residues long: Septation ring formation regulator EzrA (574 aa).

Residues 1–7 lie on the Extracellular side of the membrane; the sequence is MSSGIIL. The helical transmembrane segment at 8–26 threads the bilayer; the sequence is LLVAIVLLVIIAYVVGVVI. At 27–574 the chain is on the cytoplasmic side; that stretch reads RKRNDTLIAN…YEKTQERIRF (548 aa). Coiled-coil stretches lie at residues 104 to 141, 275 to 343, and 473 to 525; these read VRAKHEIDNVDSQLTIIEEDIVSIREALEVLKEQEEKN, LVSL…SAKY, and DIEA…VQKS.

This sequence belongs to the EzrA family.

The protein localises to the cell membrane. Functionally, negative regulator of FtsZ ring formation; modulates the frequency and position of FtsZ ring formation. Inhibits FtsZ ring formation at polar sites. Interacts either with FtsZ or with one of its binding partners to promote depolymerization. The sequence is that of Septation ring formation regulator EzrA from Streptococcus agalactiae serotype III (strain NEM316).